The following is a 410-amino-acid chain: Putative F-box/kelch-repeat protein At1g15680 (410 aa).

Positions 13–58 constitute an F-box domain; the sequence is CKRRIELPEELLAEIVARLPFISITRFKSVCKGWRSLIESTYFRHL. Kelch repeat units follow at residues 177-227 and 274-327; these read VVCM…SLKK and AYTT…YFPV.

In Arabidopsis thaliana (Mouse-ear cress), this protein is Putative F-box/kelch-repeat protein At1g15680.